The primary structure comprises 357 residues: (+)-eremophilene synthase (357 aa).

Mg(2+) is bound by residues Asp-100 and Glu-105. The DDXXE motif signature appears at 100-105 (DDDFDE). Substrate is bound at residue Arg-198. Residues Asn-244 and Ser-248 each contribute to the Mg(2+) site. Residue Lys-251 participates in substrate binding. Asp-252 is a Mg(2+) binding site. 331–332 (RY) is a substrate binding site.

This sequence belongs to the terpene synthase family. Mg(2+) serves as cofactor.

It catalyses the reaction (2E,6E)-farnesyl diphosphate = (+)-eremophilene + diphosphate. It participates in secondary metabolite biosynthesis; terpenoid biosynthesis. Functionally, catalyzes the conversion of (2E,6E)-farnesyl diphosphate (FPP) to yield the bicyclic sesquiterpene eremophilene via a 1,10-cyclization, which requires the abstraction of the pyrophosphate from FPP to yield the (E,E)-germacradienyl cation. The only accepted substrate is farnesyl diphosphate (FPP). The polypeptide is (+)-eremophilene synthase (Gibberella fujikuroi (strain CBS 195.34 / IMI 58289 / NRRL A-6831) (Bakanae and foot rot disease fungus)).